The following is a 188-amino-acid chain: dCTP deaminase (188 aa).

Residues 111–116 (KSTYAR), 135–137 (TLE), Gln-156, Tyr-170, and Gln-180 each bind dCTP. The active-site Proton donor/acceptor is Glu-137.

This sequence belongs to the dCTP deaminase family. In terms of assembly, homotrimer.

The catalysed reaction is dCTP + H2O + H(+) = dUTP + NH4(+). It participates in pyrimidine metabolism; dUMP biosynthesis; dUMP from dCTP (dUTP route): step 1/2. Functionally, catalyzes the deamination of dCTP to dUTP. This Cupriavidus pinatubonensis (strain JMP 134 / LMG 1197) (Cupriavidus necator (strain JMP 134)) protein is dCTP deaminase.